A 376-amino-acid chain; its full sequence is Succinyl-diaminopimelate desuccinylase (376 aa).

Residue His67 coordinates Zn(2+). Asp69 is a catalytic residue. Asp100 is a binding site for Zn(2+). Glu134 acts as the Proton acceptor in catalysis. Glu135, Glu163, and His349 together coordinate Zn(2+).

The protein belongs to the peptidase M20A family. DapE subfamily. Homodimer. Requires Zn(2+) as cofactor. The cofactor is Co(2+).

It carries out the reaction N-succinyl-(2S,6S)-2,6-diaminopimelate + H2O = (2S,6S)-2,6-diaminopimelate + succinate. Its pathway is amino-acid biosynthesis; L-lysine biosynthesis via DAP pathway; LL-2,6-diaminopimelate from (S)-tetrahydrodipicolinate (succinylase route): step 3/3. In terms of biological role, catalyzes the hydrolysis of N-succinyl-L,L-diaminopimelic acid (SDAP), forming succinate and LL-2,6-diaminopimelate (DAP), an intermediate involved in the bacterial biosynthesis of lysine and meso-diaminopimelic acid, an essential component of bacterial cell walls. This is Succinyl-diaminopimelate desuccinylase from Xanthomonas campestris pv. campestris (strain 8004).